The chain runs to 92 residues: Small ribosomal subunit protein uS19c (92 aa).

The protein belongs to the universal ribosomal protein uS19 family.

The protein resides in the plastid. It is found in the chloroplast. Protein S19 forms a complex with S13 that binds strongly to the 16S ribosomal RNA. The polypeptide is Small ribosomal subunit protein uS19c (rps19) (Marchantia polymorpha (Common liverwort)).